A 70-amino-acid polypeptide reads, in one-letter code: UPF0337 protein BC_3635 (70 aa).

This sequence belongs to the UPF0337 (CsbD) family.

This chain is UPF0337 protein BC_3635, found in Bacillus cereus (strain ATCC 14579 / DSM 31 / CCUG 7414 / JCM 2152 / NBRC 15305 / NCIMB 9373 / NCTC 2599 / NRRL B-3711).